Consider the following 88-residue polypeptide: Molybdopterin synthase sulfur carrier subunit (88 aa).

The residue at position 88 (Gly-88) is a 1-thioglycine; alternate. Residue Gly-88 is modified to Glycyl adenylate; alternate.

The protein belongs to the MoaD family. MOCS2A subfamily. Heterotetramer; composed of 2 small (MOCS2A) and 2 large (MOCS2B) subunits. C-terminal thiocarboxylation occurs in 2 steps, it is first acyl-adenylated (-COAMP) via the hesA/moeB/thiF part of uba4, then thiocarboxylated (-COSH) via the rhodanese domain of uba4.

The protein localises to the cytoplasm. It functions in the pathway cofactor biosynthesis; molybdopterin biosynthesis. In terms of biological role, acts as a sulfur carrier required for molybdopterin biosynthesis. Component of the molybdopterin synthase complex that catalyzes the conversion of precursor Z into molybdopterin by mediating the incorporation of 2 sulfur atoms into precursor Z to generate a dithiolene group. In the complex, serves as sulfur donor by being thiocarboxylated (-COSH) at its C-terminus by uba4. After interaction with MOCS2B, the sulfur is then transferred to precursor Z to form molybdopterin. This Aspergillus niger (strain ATCC MYA-4892 / CBS 513.88 / FGSC A1513) protein is Molybdopterin synthase sulfur carrier subunit.